Reading from the N-terminus, the 417-residue chain is MQTYLVGGAVRDYLLGLPVKDRDWVVVGADAQTMLAQGFQPVGKDFPVFLHPETHEEYALARTERKTAKGYVGFSFHADKDVTLEQDLMRRDLTINAMAQDADGKIIDPFGGQRDLAAGILRHVSPAFAEDPVRILRTARFAARYKFEIAEETIKLMRQMVENGEADALVAERVWQEFAKGLMEKNPRKMIEVLRECGALKVLLPEVNALFGVPQRADYHPEIDSGIHTLMTLQRAADMGLSLPERYAALLHDLGKAKTPSDILPRHHGHDLAGVEPVRKVNQRLRAPKHCAELAELVCRWHIIFHQVGQLKSQTILNVLKKTDAFRRPERFQTALNVCIADTQGRLNREHTPYPQRAHWLALLEAANQADSGKIAAECRSQGKAHLIAEQIDRARLAQIAPLQKAFRAAQDKTEKH.

ATP is bound by residues glycine 8 and arginine 11. 2 residues coordinate CTP: glycine 8 and arginine 11. 2 residues coordinate Mg(2+): aspartate 21 and aspartate 23. 3 residues coordinate ATP: arginine 91, arginine 137, and arginine 140. Residues arginine 91, arginine 137, and arginine 140 each contribute to the CTP site. Residues 225–326 (SGIHTLMTLQ…LNVLKKTDAF (102 aa)) form the HD domain.

It belongs to the tRNA nucleotidyltransferase/poly(A) polymerase family. Bacterial CCA-adding enzyme type 1 subfamily. Monomer. Can also form homodimers and oligomers. Mg(2+) serves as cofactor. The cofactor is Ni(2+).

The catalysed reaction is a tRNA precursor + 2 CTP + ATP = a tRNA with a 3' CCA end + 3 diphosphate. It carries out the reaction a tRNA with a 3' CCA end + 2 CTP + ATP = a tRNA with a 3' CCACCA end + 3 diphosphate. Its function is as follows. Catalyzes the addition and repair of the essential 3'-terminal CCA sequence in tRNAs without using a nucleic acid template. Adds these three nucleotides in the order of C, C, and A to the tRNA nucleotide-73, using CTP and ATP as substrates and producing inorganic pyrophosphate. tRNA 3'-terminal CCA addition is required both for tRNA processing and repair. Also involved in tRNA surveillance by mediating tandem CCA addition to generate a CCACCA at the 3' terminus of unstable tRNAs. While stable tRNAs receive only 3'-terminal CCA, unstable tRNAs are marked with CCACCA and rapidly degraded. The polypeptide is Multifunctional CCA protein (Neisseria meningitidis serogroup A / serotype 4A (strain DSM 15465 / Z2491)).